Reading from the N-terminus, the 613-residue chain is Phosphoinositide phospholipase C 6 (613 aa).

A PI-PLC X-box domain is found at 137 to 281; the sequence is QDMTAPLSHY…LLHRIIISTK (145 aa). Catalysis depends on residues His-152 and His-198. Residues 288 to 349 are disordered; it reads ESRNPIVKQK…ASEDQKPAYK (62 aa). Residues 349–465 form the PI-PLC Y-box domain; the sequence is KRLITIHAGK…GYVKKPNFLM (117 aa). Residues 466 to 595 enclose the C2 domain; the sequence is KKGFHDEVFD…PGIRSVPLYD (130 aa).

Ca(2+) is required as a cofactor. Expressed in leaves, flowers and siliques, but not in roots.

It is found in the cell membrane. The enzyme catalyses a 1,2-diacyl-sn-glycero-3-phospho-(1D-myo-inositol-4,5-bisphosphate) + H2O = 1D-myo-inositol 1,4,5-trisphosphate + a 1,2-diacyl-sn-glycerol + H(+). Functionally, the production of the second messenger molecules diacylglycerol (DAG) and inositol 1,4,5-trisphosphate (IP3) is mediated by activated phosphatidylinositol-specific phospholipase C enzymes. The chain is Phosphoinositide phospholipase C 6 (PLC6) from Arabidopsis thaliana (Mouse-ear cress).